Reading from the N-terminus, the 419-residue chain is Structure-specific endonuclease subunit slx4 (419 aa).

Belongs to the SLX4 family. In terms of assembly, forms a heterodimer with slx1. In terms of processing, phosphorylated in response to DNA damage.

It localises to the nucleus. Its subcellular location is the nucleolus. Functionally, regulatory subunit of the slx1-slx4 structure-specific endonuclease that resolves DNA secondary structures generated during DNA repair and recombination. Has endonuclease activity towards branched DNA substrates, introducing single-strand cuts in duplex DNA close to junctions with ss-DNA. Has a preference for stem-loop (SL) and splayed arm Y structures. Introduces a single-strand cut in duplex DNA on the 3' side of a double-strand/single-strand junction with respect to the single-strand moving 3' to 5' away from the junction. Plays a critical role in maintaining the integrity of the ribosomal DNA (rDNA) loci, where it has a role in re-starting stalled replication forks. The complex initiates homologous recombination (HR) events, used to maintain rDNA copy number, in the rDNA repeats that are processed by a mechanism that requires rad22, but not rhp51. Has Holliday junction resolvase activity in vitro. Slx4 is required for efficient processing of DNA substrates. This Schizosaccharomyces pombe (strain 972 / ATCC 24843) (Fission yeast) protein is Structure-specific endonuclease subunit slx4.